A 529-amino-acid chain; its full sequence is MSVKWTSVILLIQLSFCFSSGNCGKVLVWAAEYSHWMNIKTILDELIQRGHEVTVLASSASILFDPNNSSALKIEIYPTSLTKTELENFIMQQIKRWSDLPKDTFWLYFSQVQEIMSIFGDITRKFCKDVVSNKKFMKKVQESRFDVIFADAIFPCSELLAELFNIPFVYSLSFSPGYTFEKHSGGFIFPPSYVPVVMSELTDQMTFMERVKNMIYVLYFDFWFEIFDMKKWDQFYSEVLGRPTTLSETMGKADVWLIRNSWNFQFPYPLLPNVDFVGGLHCKPAKPLPKEMEDFVQSSGENGVVVFSLGSMVSNMTEERANVIASALAQIPQKVLWRFDGNKPDTLGLNTRLYKWIPQNDLLGHPKTRAFITHGGANGIYEAIYHGIPMVGIPLFADQPDNIAHMKARGAAVRVDFNTMSSTDLLNALKRVINDPSYKENVMKLSRIQHDQPVKPLDRAVFWIEFVMRHKGAKHLRVAAHDLTWFQYHSLDVIGFLLVCVATVIFIVTKCCLFCFWKFARKAKKGKND.

The first 23 residues, M1–C23, serve as a signal peptide directing secretion. N-linked (GlcNAc...) asparagine glycans are attached at residues N67, N68, and N315. Residues T373–G379 and D398 contribute to the UDP-alpha-D-glucuronate site. The chain crosses the membrane as a helical span at residues V493 to T509.

It belongs to the UDP-glycosyltransferase family.

It localises to the endoplasmic reticulum membrane. The enzyme catalyses glucuronate acceptor + UDP-alpha-D-glucuronate = acceptor beta-D-glucuronoside + UDP + H(+). It catalyses the reaction 17alpha-estradiol + UDP-alpha-D-glucuronate = 17alpha-estradiol 17-O-(beta-D-glucuronate) + UDP + H(+). The catalysed reaction is 17beta-estradiol + UDP-alpha-D-glucuronate = 17beta-estradiol 17-O-(beta-D-glucuronate) + UDP + H(+). It carries out the reaction 2-hydroxy-17beta-estradiol + UDP-alpha-D-glucuronate = 2-hydroxy-17beta-estradiol 3-O-(beta-D-glucuronate) + UDP + H(+). The enzyme catalyses 4-hydroxy-17beta-estradiol + UDP-alpha-D-glucuronate = 17beta-estradiol 4-O-(beta-D-glucuronate) + UDP + H(+). It catalyses the reaction 4-hydroxyestrone + UDP-alpha-D-glucuronate = estrone 4-O-(beta-D-glucuronate) + UDP + H(+). The catalysed reaction is 16alpha-hydroxyestrone + UDP-alpha-D-glucuronate = 16alpha-hydroxyestrone 16-O-(beta-D-glucuronate) + UDP + H(+). It carries out the reaction 16alpha,17beta-estriol + UDP-alpha-D-glucuronate = 16alpha,17beta-estriol 16-O-(beta-D-glucuronate) + UDP + H(+). The enzyme catalyses 16beta,17beta-estriol + UDP-alpha-D-glucuronate = 16beta,17beta-estriol 16-O-(beta-D-glucuronate) + UDP + H(+). It catalyses the reaction 16alpha,17alpha-estriol + UDP-alpha-D-glucuronate = 16alpha,17alpha-estriol 16-O-(beta-D-glucuronate) + UDP + H(+). The catalysed reaction is 16alpha,17alpha-estriol + UDP-alpha-D-glucuronate = 16alpha,17alpha-estriol 17-O-(beta-D-glucuronate) + UDP + H(+). It carries out the reaction epitestosterone + UDP-alpha-D-glucuronate = epitestosterone 17-O-(beta-D-glucuronate) + UDP + H(+). The enzyme catalyses hyodeoxycholate + UDP-alpha-D-glucuronate = hyodeoxycholate 6-O-(beta-D-glucuronate) + UDP + H(+). It catalyses the reaction hyocholate + UDP-alpha-D-glucuronate = hyocholate 6-O-(beta-D-glucuronate) + UDP + H(+). The catalysed reaction is all-trans-retinoate + UDP-alpha-D-glucuronate = all-trans-retinoyl-1-O-(beta-D-glucuronate) + UDP. It carries out the reaction all-trans-4-hydroxyretinoate + UDP-alpha-D-glucuronate = all-trans-4-hydroxy-4-O-(beta-D-glucuronide)-retinoate + UDP + H(+). The enzyme catalyses (E)-ferulate + UDP-alpha-D-glucuronate = (E)-ferulic acid beta-D-glucuronate ester + UDP. It catalyses the reaction 8-iso-prostaglandin F2alpha + UDP-alpha-D-glucuronate = 8-iso-prostaglandin F2alpha-glucuronide + UDP + H(+). The catalysed reaction is 5-epi-5-F2t-IsoP + UDP-alpha-D-glucuronate = 5-epi-5-F2t-IsoP-glucuronide + UDP + H(+). It carries out the reaction (5Z,8Z,11Z,14Z)-eicosatetraenoate + UDP-alpha-D-glucuronate = O-[(5Z),(8Z),(11Z),(14Z)-eicosatetraenoyl]-beta-D-glucuronate + UDP. The enzyme catalyses 15-hydroxy-(5Z,8Z,11Z,13E)-eicosatetraenoate + UDP-alpha-D-glucuronate = 15-O-(beta-D-glucuronosyl)-(5Z,8Z,11Z,14Z)-eicosatetraenoate + UDP + H(+). It catalyses the reaction 20-hydroxy-(5Z,8Z,11Z,14Z)-eicosatetraenoate + UDP-alpha-D-glucuronate = 20-O-(beta-D-glucuronosyl)-(5Z,8Z,11Z,14Z)-eicosatetraenoate + UDP + H(+). The catalysed reaction is (E)-ferulate + UDP-alpha-D-glucuronate = (E)-4-O-(beta-D-glucuronosyl)-ferulate + UDP + H(+). It carries out the reaction prostaglandin B1 + UDP-alpha-D-glucuronate = 15-O-(beta-D-glucuronosyl)-prostaglandin B1 + UDP + H(+). The enzyme catalyses mycophenolate + UDP-alpha-D-glucuronate = mycophenolic acid O-acyl-beta-D-glucuronide + UDP. It catalyses the reaction losartan + UDP-alpha-D-glucuronate = losartan-2-N-beta-D-glucuronide + UDP. The catalysed reaction is candesartan + UDP-alpha-D-glucuronate = candesartan O-beta-D-glucuronoside + UDP. It carries out the reaction candesartan + UDP-alpha-D-glucuronate = candesartan-2-N-beta-D-glucuronide + UDP. The enzyme catalyses zolasartan + UDP-alpha-D-glucuronate = zolarsartan O-beta-D-glucuronoside + UDP. In terms of biological role, UDP-glucuronosyltransferase (UGT) that catalyzes phase II biotransformation reactions in which lipophilic substrates are conjugated with glucuronic acid to increase the metabolite's water solubility, thereby facilitating excretion into either the urine or bile. Essential for the elimination and detoxification of drugs, xenobiotics and endogenous compounds. Catalyzes the glucuronidation of endogenous steroid hormones such as androgens (epitestosterone, androsterone) and estrogens (estradiol, epiestradiol, estriol, catechol estrogens). Also regulates the levels of retinoic acid, a major metabolite of vitamin A involved in apoptosis, cellular growth and differentiation, and embryonic development. Contributes to bile acid (BA) detoxification by catalyzing the glucuronidation of BA substrates, which are natural detergents for dietary lipids absorption. Involved in the glucuronidation of arachidonic acid (AA) and AA-derived eicosanoids including 15-HETE, 20-HETE, PGE2, PGB1 and F2-isoprostanes (8-iso-PGF2alpha and 5-epi-5-F2t-IsoP). Involved in the glucuronidation of the phytochemical ferulic acid at the phenolic or the carboxylic acid group. Involved in the glucuronidation of the AGTR1 angiotensin receptor antagonist losartan, caderastan and zolarsatan, drugs which can inhibit the effect of angiotensin II. Also metabolizes mycophenolate, an immunosuppressive agent. The polypeptide is UDP-glucuronosyltransferase 2B7 (Homo sapiens (Human)).